The sequence spans 124 residues: Large ribosomal subunit protein bL12 (124 aa).

This sequence belongs to the bacterial ribosomal protein bL12 family. As to quaternary structure, homodimer. Part of the ribosomal stalk of the 50S ribosomal subunit. Forms a multimeric L10(L12)X complex, where L10 forms an elongated spine to which 2 to 4 L12 dimers bind in a sequential fashion. Binds GTP-bound translation factors.

Forms part of the ribosomal stalk which helps the ribosome interact with GTP-bound translation factors. Is thus essential for accurate translation. This chain is Large ribosomal subunit protein bL12, found in Liberibacter africanus subsp. capensis.